Consider the following 372-residue polypeptide: L-selectin (372 aa).

Residues 1–28 form the signal peptide; it reads MIFPWKCQSTQRDLWNIFKLWGWTMLCC. A propeptide spanning residues 29–38 is cleaved from the precursor; that stretch reads DFLAHHGTDC. Over 39–332 the chain is Extracellular; sequence WTYHYSEKPM…FSMIKEGDYN (294 aa). Residues 55 to 155 enclose the C-type lectin domain; it reads RFCRDNYTDL…ACHKLKAALC (101 aa). Disulfide bonds link Cys57-Cys155, Cys128-Cys147, Cys160-Cys171, Cys165-Cys180, Cys182-Cys191, Cys197-Cys241, Cys227-Cys254, Cys259-Cys303, and Cys289-Cys316. N-linked (GlcNAc...) asparagine glycosylation is found at Asn60 and Asn104. The Ca(2+) site is built by Glu118, Asn120, Glu126, Asn143, and Asp144. One can recognise an EGF-like domain in the interval 156-192; that stretch reads YTASCQPWSCSGHGECVEIINNYTCNCDVGYYGPQCQ. The N-linked (GlcNAc...) asparagine glycan is linked to Asn177. Sushi domains follow at residues 195-256 and 257-318; these read IQCE…TCQV and IQCE…ICQK. N-linked (GlcNAc...) asparagine glycans are attached at residues Asn232, Asn246, and Asn271. The chain crosses the membrane as a helical span at residues 333-355; the sequence is PLFIPVAVMVTAFSGLAFIIWLA. Residues 356–372 lie on the Cytoplasmic side of the membrane; it reads RRLKKGKKSKRSMNDPY.

It belongs to the selectin/LECAM family. In terms of assembly, interaction with SELPLG/PSGL1 and PODXL2 is required for promoting recruitment and rolling of leukocytes. This interaction is dependent on the sialyl Lewis X glycan modification of SELPLG and PODXL2, and tyrosine sulfation modifications of SELPLG. Sulfation on 'Tyr-51' of SELPLG is important for L-selectin binding. Post-translationally, N-glycosylated. As to expression, expressed in B-cell lines and T-lymphocytes.

It is found in the cell membrane. Its function is as follows. Calcium-dependent lectin that mediates cell adhesion by binding to glycoproteins on neighboring cells. Mediates the adherence of lymphocytes to endothelial cells of high endothelial venules in peripheral lymph nodes. Promotes initial tethering and rolling of leukocytes in endothelia. This Homo sapiens (Human) protein is L-selectin (SELL).